The sequence spans 464 residues: Alpha-amylase (464 aa).

Positions 1 to 21 (MKNTAGILAIAGMLIAPLAHA) are cleaved as a signal peptide. Substrate-binding residues include His-107 and Arg-213. The active-site Nucleophile is the Asp-215. Residue 218 to 219 (KH) participates in substrate binding. The active-site Proton donor is Glu-242. Gly-247 and His-313 together coordinate substrate.

Belongs to the glycosyl hydrolase 13 family.

The protein resides in the secreted. It catalyses the reaction Endohydrolysis of (1-&gt;4)-alpha-D-glucosidic linkages in polysaccharides containing three or more (1-&gt;4)-alpha-linked D-glucose units.. The sequence is that of Alpha-amylase from Aeromonas hydrophila.